Here is a 256-residue protein sequence, read N- to C-terminus: Ribonuclease 3 (256 aa).

Positions 3 to 125 (LDALQQRLGY…IVGAVFLDAG (123 aa)) constitute an RNase III domain. Glu38 serves as a coordination point for Mg(2+). Residue Asp42 is part of the active site. Mg(2+) is bound by residues Asp111 and Glu114. Residue Glu114 is part of the active site. One can recognise a DRBM domain in the interval 152–222 (DAKTLLQEYL…AKLALDEVQK (71 aa)). Positions 229–256 (KRSRAERTGKTRKQPVPPDPQLSLRLKE) are disordered.

It belongs to the ribonuclease III family. In terms of assembly, homodimer. Mg(2+) serves as cofactor.

Its subcellular location is the cytoplasm. It carries out the reaction Endonucleolytic cleavage to 5'-phosphomonoester.. In terms of biological role, digests double-stranded RNA. Involved in the processing of primary rRNA transcript to yield the immediate precursors to the large and small rRNAs (23S and 16S). Processes some mRNAs, and tRNAs when they are encoded in the rRNA operon. Processes pre-crRNA and tracrRNA of type II CRISPR loci if present in the organism. The chain is Ribonuclease 3 from Cupriavidus pinatubonensis (strain JMP 134 / LMG 1197) (Cupriavidus necator (strain JMP 134)).